A 1103-amino-acid polypeptide reads, in one-letter code: Voltage-dependent calcium channel subunit alpha-2/delta-1 (1103 aa).

Positions 1–24 are cleaved as a signal peptide; it reads MAAGCLLALTLTLFQSGLIGPSSE. Topologically, residues 25–1073 are extracellular; sequence EPFPSPVTIK…VLEDYTDCGG (1049 aa). N92 is a glycosylation site (N-linked (GlcNAc...) asparagine). The residue at position 119 (S119) is a Phosphoserine. N-linked (GlcNAc...) asparagine glycans are attached at residues N136 and N184. Residues 253 to 430 form the VWFA domain; sequence DMLILVDVSG…INTQEYLDVL (178 aa). The a divalent metal cation site is built by D259, S261, and S263. Residues 259-263 carry the MIDAS-like motif motif; the sequence is DVSGS. N-linked (GlcNAc...) asparagine glycans are attached at residues N324 and N348. A disulfide bond links C404 and C1059. The Cache domain occupies 446–537; sequence WTNVYLDALE…QPKPIGVGIP (92 aa). N-linked (GlcNAc...) asparagine glycosylation is found at N613, N781, and N888. Residues 1074–1094 traverse the membrane as a helical segment; that stretch reads VSGLNPSLWSIFGLQFILLWL. Residues 1095–1103 are Cytoplasmic-facing; the sequence is VSGSRHYLL.

This sequence belongs to the calcium channel subunit alpha-2/delta family. As to quaternary structure, dimer formed of alpha-2-1 and delta-1 chains; disulfide-linked. Voltage-dependent calcium channels are multisubunit complexes, consisting of alpha-1 (CACNA1), alpha-2 (CACNA2D), beta (CACNB) and delta (CACNA2D) subunits in a 1:1:1:1 ratio. Proteolytically processed into subunits alpha-2-1 and delta-1 that are disulfide-linked. Isoform 2A is expressed in skeletal muscle and aorta. Isoform 2B is expressed in brain. Isoform 2C is expressed in heart. Isoform 2D is expressed in heart and smooth muscle. Isoform 2E is expressed in smooth muscle. All five isoforms are expressed in the cardiovascular system.

The protein localises to the membrane. It is found in the cell membrane. In terms of biological role, the alpha-2/delta subunit of voltage-dependent calcium channels regulates calcium current density and activation/inactivation kinetics of the calcium channel. Plays an important role in excitation-contraction coupling. In Mus musculus (Mouse), this protein is Voltage-dependent calcium channel subunit alpha-2/delta-1 (Cacna2d1).